We begin with the raw amino-acid sequence, 125 residues long: Holo-[acyl-carrier-protein] synthase (125 aa).

Mg(2+) contacts are provided by Asp8 and Glu57.

Belongs to the P-Pant transferase superfamily. AcpS family. It depends on Mg(2+) as a cofactor.

It localises to the cytoplasm. It carries out the reaction apo-[ACP] + CoA = holo-[ACP] + adenosine 3',5'-bisphosphate + H(+). In terms of biological role, transfers the 4'-phosphopantetheine moiety from coenzyme A to a Ser of acyl-carrier-protein. The sequence is that of Holo-[acyl-carrier-protein] synthase from Geotalea daltonii (strain DSM 22248 / JCM 15807 / FRC-32) (Geobacter daltonii).